The sequence spans 387 residues: Erythronate-4-phosphate dehydrogenase (387 aa).

The substrate site is built by Ser45 and Thr67. NAD(+) is bound at residue Asp147. Arg208 is a catalytic residue. Asp232 serves as a coordination point for NAD(+). Glu237 is a catalytic residue. Residue His254 is the Proton donor of the active site. Gly257 is an NAD(+) binding site. Residue Tyr258 coordinates substrate.

Belongs to the D-isomer specific 2-hydroxyacid dehydrogenase family. PdxB subfamily. In terms of assembly, homodimer.

The protein resides in the cytoplasm. The catalysed reaction is 4-phospho-D-erythronate + NAD(+) = (R)-3-hydroxy-2-oxo-4-phosphooxybutanoate + NADH + H(+). It functions in the pathway cofactor biosynthesis; pyridoxine 5'-phosphate biosynthesis; pyridoxine 5'-phosphate from D-erythrose 4-phosphate: step 2/5. In terms of biological role, catalyzes the oxidation of erythronate-4-phosphate to 3-hydroxy-2-oxo-4-phosphonooxybutanoate. In Shewanella violacea (strain JCM 10179 / CIP 106290 / LMG 19151 / DSS12), this protein is Erythronate-4-phosphate dehydrogenase.